The primary structure comprises 312 residues: D-alanine--D-alanine ligase (312 aa).

Residues 108–308 (KLVWQQTGIP…YSELVVKVLS (201 aa)) enclose the ATP-grasp domain. 138–193 (VAKLGVPLFVKPASEGSSVAVEKVKSADALPAALEEAAKHDKIVIVEKSIEGGGEY) contributes to the ATP binding site. 3 residues coordinate Mg(2+): D262, E275, and N277.

The protein belongs to the D-alanine--D-alanine ligase family. The cofactor is Mg(2+). Requires Mn(2+) as cofactor.

It is found in the cytoplasm. The catalysed reaction is 2 D-alanine + ATP = D-alanyl-D-alanine + ADP + phosphate + H(+). It participates in cell wall biogenesis; peptidoglycan biosynthesis. Functionally, cell wall formation. The polypeptide is D-alanine--D-alanine ligase (Burkholderia mallei (strain NCTC 10247)).